A 616-amino-acid polypeptide reads, in one-letter code: MPQYRSRTSTHGRNMAGARALWRATGMKEDDFQKPIIAIANSFTQFVPGHVHLKDLGQLVAREIERAGGVAKEFNTIAVDDGIAMGHSGMLYSLPSRDLIADAVEYMVSAHCADALVCISNCDKITPGMLMAALRLNIPVVFVSGGPMEAGKVNWQGNMHKLDLVDAMVAAADSNVSDAESEAIERSACPTCGSCSGMFTANSMNCLTEALGLSLPGNGSTLATHAARKELFLKAGRLIVEITKRYYEQDDESVLPRSIANFKAFENAMSLDVAMGGSTNTVLHLLAAAHEAEVDFTMADIDRISRGVPCICKVAPATAKYHMEDVHRAGGVMAILSELSRAGLIHRDTPTVHSPTLGEALDKWDIMTTNDEDVKKFYRAAPGGISTTIAFSQSMLWPDLDTDRKEGCIRDKDHAYSQDGGLAVLYGNIALDGCIVKTAGVDDSILKFTGRARIFESQDDAVAAILADKIEAGDIVIIRYEGPRGGPGMQEMLYPTSYLKSKGLGKACALLTDGRFSGGTSGLSIGHASPEAAEGGAIGLVEENDIIEIDIPNRTIHLAVKDEVLAHRRAAMEARGKDAWKPVNRQRHISVALRAYAAMSTSAAKGAVRDVSQIEK.

D81 provides a ligand contact to Mg(2+). C122 is a [2Fe-2S] cluster binding site. Residues D123 and K124 each contribute to the Mg(2+) site. K124 carries the N6-carboxylysine modification. C195 provides a ligand contact to [2Fe-2S] cluster. E491 lines the Mg(2+) pocket. S517 serves as the catalytic Proton acceptor.

This sequence belongs to the IlvD/Edd family. Homodimer. It depends on [2Fe-2S] cluster as a cofactor. Mg(2+) serves as cofactor.

It catalyses the reaction (2R)-2,3-dihydroxy-3-methylbutanoate = 3-methyl-2-oxobutanoate + H2O. The enzyme catalyses (2R,3R)-2,3-dihydroxy-3-methylpentanoate = (S)-3-methyl-2-oxopentanoate + H2O. Its pathway is amino-acid biosynthesis; L-isoleucine biosynthesis; L-isoleucine from 2-oxobutanoate: step 3/4. It participates in amino-acid biosynthesis; L-valine biosynthesis; L-valine from pyruvate: step 3/4. Functionally, functions in the biosynthesis of branched-chain amino acids. Catalyzes the dehydration of (2R,3R)-2,3-dihydroxy-3-methylpentanoate (2,3-dihydroxy-3-methylvalerate) into 2-oxo-3-methylpentanoate (2-oxo-3-methylvalerate) and of (2R)-2,3-dihydroxy-3-methylbutanoate (2,3-dihydroxyisovalerate) into 2-oxo-3-methylbutanoate (2-oxoisovalerate), the penultimate precursor to L-isoleucine and L-valine, respectively. The sequence is that of Dihydroxy-acid dehydratase from Methylobacillus flagellatus (strain ATCC 51484 / DSM 6875 / VKM B-1610 / KT).